We begin with the raw amino-acid sequence, 331 residues long: Light-harvesting complex I LH35 proteins (331 aa).

The protein resides in the plastid. It localises to the chloroplast. This is Light-harvesting complex I LH35 proteins from Euglena gracilis.